The primary structure comprises 84 residues: U8-theraphotoxin-Hhn1d (84 aa).

The first 21 residues, 1 to 21, serve as a signal peptide directing secretion; the sequence is MKVVLIVCLVWVMAMMELVSC. Disulfide bonds link Cys-23–Cys-35, Cys-29–Cys-44, Cys-34–Cys-67, Cys-54–Cys-75, and Cys-69–Cys-81.

The protein belongs to the AVIT (prokineticin) family. Expressed by the venom gland.

Its subcellular location is the secreted. The sequence is that of U8-theraphotoxin-Hhn1d from Cyriopagopus hainanus (Chinese bird spider).